A 300-amino-acid polypeptide reads, in one-letter code: MKFLLDVLLLLPLLIVCSLESFVKLFIPKRRKSVTGEIVLITGAGHGIGRLTAYEFAKLKSKLVLWDINKHGLEETAAKCKGLGAKVHTFVVDCSNREDIYSAAKKVKAEIGDVSILVNNAGVVYTSDLFATQDPQIEKTFEVNVLAHFWTTKAFLPAMMKNNHGHIVTVASAAGHVSVPFLLAYCSSKFAAVGFHKTLTDELAALQITGVKTTCLCPNFVNTGFIKNPSTSLGPTLEPEEVVNRLMHGILTEQKMIFIPSSIAFLTTLERILPERFLAVLKRKISVKFDAVIGYRMKAQ.

An N-terminal signal peptide occupies residues 1 to 19 (MKFLLDVLLLLPLLIVCSL). 40-64 (LITGAGHGIGRLTAYEFAKLKSKLV) contacts NADP(+). Ser172 lines the substrate pocket. The Proton acceptor role is filled by Tyr185.

This sequence belongs to the short-chain dehydrogenases/reductases (SDR) family. 17-beta-HSD 3 subfamily.

The protein localises to the endoplasmic reticulum. It localises to the lipid droplet. The enzyme catalyses 17beta-estradiol + NAD(+) = estrone + NADH + H(+). The catalysed reaction is 17beta-estradiol + NADP(+) = estrone + NADPH + H(+). Can convert androstan-3-alpha,17-beta-diol (3-alpha-diol) to androsterone in vitro, suggesting that it may participate in androgen metabolism during steroidogenesis. May act by metabolizing compounds that stimulate steroid synthesis and/or by generating metabolites that inhibit it. Has no activity toward DHEA (dehydroepiandrosterone), or A-dione (4-androste-3,17-dione), and only a slight activity toward testosterone to A-dione. This is Estradiol 17-beta-dehydrogenase 11 (HSD17B11) from Pongo abelii (Sumatran orangutan).